The sequence spans 263 residues: 3'-5' ssDNA/RNA exonuclease TatD (263 aa).

Positions 91, 127, and 152 each coordinate a divalent metal cation.

This sequence belongs to the metallo-dependent hydrolases superfamily. TatD-type hydrolase family. TatD subfamily. In terms of assembly, monomer. Mg(2+) is required as a cofactor.

The protein localises to the cytoplasm. 3'-5' exonuclease that prefers single-stranded DNA and RNA. May play a role in the H(2)O(2)-induced DNA damage repair. In Klebsiella pneumoniae (strain 342), this protein is 3'-5' ssDNA/RNA exonuclease TatD.